Consider the following 328-residue polypeptide: D-cysteine desulfhydrase (328 aa).

Lys-51 is modified (N6-(pyridoxal phosphate)lysine).

This sequence belongs to the ACC deaminase/D-cysteine desulfhydrase family. In terms of assembly, homodimer. It depends on pyridoxal 5'-phosphate as a cofactor.

The enzyme catalyses D-cysteine + H2O = hydrogen sulfide + pyruvate + NH4(+) + H(+). Catalyzes the alpha,beta-elimination reaction of D-cysteine and of several D-cysteine derivatives. It could be a defense mechanism against D-cysteine. In Salmonella agona (strain SL483), this protein is D-cysteine desulfhydrase.